We begin with the raw amino-acid sequence, 248 residues long: Small ribosomal subunit protein uS3 (248 aa).

The KH type-2 domain occupies 38 to 106; it reads IREFLSKGLD…QVALNILEVK (69 aa). Basic and acidic residues predominate over residues 214-230; that stretch reads SEINAPAERRGRGDRNA. The segment at 214–248 is disordered; it reads SEINAPAERRGRGDRNARPRRGGQRRQRAEQKQEG.

Belongs to the universal ribosomal protein uS3 family. As to quaternary structure, part of the 30S ribosomal subunit. Forms a tight complex with proteins S10 and S14.

Binds the lower part of the 30S subunit head. Binds mRNA in the 70S ribosome, positioning it for translation. This is Small ribosomal subunit protein uS3 from Corynebacterium glutamicum (strain R).